The chain runs to 208 residues: Small ribosomal subunit protein uS4 (208 aa).

One can recognise an S4 RNA-binding domain in the interval 98–160; the sequence is SRLDNVAYNM…AKSYLRIKSS (63 aa).

This sequence belongs to the universal ribosomal protein uS4 family. As to quaternary structure, part of the 30S ribosomal subunit. Contacts protein S5. The interaction surface between S4 and S5 is involved in control of translational fidelity.

Functionally, one of the primary rRNA binding proteins, it binds directly to 16S rRNA where it nucleates assembly of the body of the 30S subunit. With S5 and S12 plays an important role in translational accuracy. In Nitrosomonas eutropha (strain DSM 101675 / C91 / Nm57), this protein is Small ribosomal subunit protein uS4.